The following is a 98-amino-acid chain: Large ribosomal subunit protein uL23 (98 aa).

It belongs to the universal ribosomal protein uL23 family. Part of the 50S ribosomal subunit. Contacts protein L29, and trigger factor when it is bound to the ribosome.

Its function is as follows. One of the early assembly proteins it binds 23S rRNA. One of the proteins that surrounds the polypeptide exit tunnel on the outside of the ribosome. Forms the main docking site for trigger factor binding to the ribosome. The sequence is that of Large ribosomal subunit protein uL23 from Roseobacter denitrificans (strain ATCC 33942 / OCh 114) (Erythrobacter sp. (strain OCh 114)).